A 294-amino-acid polypeptide reads, in one-letter code: Nucleotide-binding protein Maqu_2718 (294 aa).

8–15 provides a ligand contact to ATP; sequence GRSGSGKS. 61–64 contributes to the GTP binding site; that stretch reads DARN.

This sequence belongs to the RapZ-like family.

Functionally, displays ATPase and GTPase activities. The polypeptide is Nucleotide-binding protein Maqu_2718 (Marinobacter nauticus (strain ATCC 700491 / DSM 11845 / VT8) (Marinobacter aquaeolei)).